Consider the following 219-residue polypeptide: uncharacterized protein (219 aa).

The Cytoplasmic portion of the chain corresponds to methionine 1–arginine 15. Residues tyrosine 16–asparagine 36 form a helical membrane-spanning segment. Over tyrosine 37–arginine 41 the chain is Vacuolar. The chain crosses the membrane as a helical span at residues isoleucine 42–phenylalanine 62. Residue leucine 63 is a topological domain, cytoplasmic. A helical transmembrane segment spans residues proline 64–valine 84. Topologically, residues threonine 85 to aspartate 116 are vacuolar. Residues isoleucine 117–threonine 137 traverse the membrane as a helical segment. Topologically, residues valine 138–serine 219 are cytoplasmic. The disordered stretch occupies residues proline 176–serine 219. The segment covering glutamate 191–alanine 203 has biased composition (acidic residues). Residues glutamate 206–serine 219 are compositionally biased toward basic and acidic residues.

Its subcellular location is the vacuole membrane. This is an uncharacterized protein from Saccharomyces cerevisiae (strain ATCC 204508 / S288c) (Baker's yeast).